The sequence spans 493 residues: Ketol-acid reductoisomerase (NADP(+)) (493 aa).

Positions 17–208 (LSQCRFMDRS…GGDRAGVLHS (192 aa)) constitute a KARI N-terminal Rossmann domain. Residues 45–48 (CGAQ), R68, R76, S78, and 108–110 (DKQ) contribute to the NADP(+) site. H132 is a catalytic residue. Position 158 (G158) interacts with NADP(+). 2 KARI C-terminal knotted domains span residues 209–344 (SFIA…NAPS) and 345–486 (SNEH…MKDM). The Mg(2+) site is built by D217, E221, E389, and E393. S414 provides a ligand contact to substrate.

This sequence belongs to the ketol-acid reductoisomerase family. It depends on Mg(2+) as a cofactor.

It catalyses the reaction (2R)-2,3-dihydroxy-3-methylbutanoate + NADP(+) = (2S)-2-acetolactate + NADPH + H(+). The catalysed reaction is (2R,3R)-2,3-dihydroxy-3-methylpentanoate + NADP(+) = (S)-2-ethyl-2-hydroxy-3-oxobutanoate + NADPH + H(+). It participates in amino-acid biosynthesis; L-isoleucine biosynthesis; L-isoleucine from 2-oxobutanoate: step 2/4. The protein operates within amino-acid biosynthesis; L-valine biosynthesis; L-valine from pyruvate: step 2/4. Functionally, involved in the biosynthesis of branched-chain amino acids (BCAA). Catalyzes an alkyl-migration followed by a ketol-acid reduction of (S)-2-acetolactate (S2AL) to yield (R)-2,3-dihydroxy-isovalerate. In the isomerase reaction, S2AL is rearranged via a Mg-dependent methyl migration to produce 3-hydroxy-3-methyl-2-ketobutyrate (HMKB). In the reductase reaction, this 2-ketoacid undergoes a metal-dependent reduction by NADPH to yield (R)-2,3-dihydroxy-isovalerate. The chain is Ketol-acid reductoisomerase (NADP(+)) from Shewanella amazonensis (strain ATCC BAA-1098 / SB2B).